The primary structure comprises 452 residues: Bifunctional protein GlmU (452 aa).

The tract at residues 1 to 226 is pyrophosphorylase; that stretch reads MVAVAILAAG…SQEILGINDR (226 aa). UDP-N-acetyl-alpha-D-glucosamine-binding positions include 7 to 10, Lys21, Gln73, and 78 to 79; these read LAAG and GT. A Mg(2+)-binding site is contributed by Asp103. 4 residues coordinate UDP-N-acetyl-alpha-D-glucosamine: Gly140, Glu155, Asn170, and Asn224. Asn224 serves as a coordination point for Mg(2+). A linker region spans residues 227–247; that stretch reads LQLADSFRILQERIRQQWMLA. The segment at 248 to 452 is N-acetyltransferase; that stretch reads GVTLVDPTSI…ENWSTPTTEQ (205 aa). 2 residues coordinate UDP-N-acetyl-alpha-D-glucosamine: Arg329 and Lys347. The active-site Proton acceptor is the His359. UDP-N-acetyl-alpha-D-glucosamine contacts are provided by Tyr362 and Asn373. Acetyl-CoA-binding positions include Ala376, 382 to 383, Ala419, and Arg436; that span reads NY.

It in the N-terminal section; belongs to the N-acetylglucosamine-1-phosphate uridyltransferase family. This sequence in the C-terminal section; belongs to the transferase hexapeptide repeat family. In terms of assembly, homotrimer. The cofactor is Mg(2+).

It is found in the cytoplasm. The enzyme catalyses alpha-D-glucosamine 1-phosphate + acetyl-CoA = N-acetyl-alpha-D-glucosamine 1-phosphate + CoA + H(+). It carries out the reaction N-acetyl-alpha-D-glucosamine 1-phosphate + UTP + H(+) = UDP-N-acetyl-alpha-D-glucosamine + diphosphate. It participates in nucleotide-sugar biosynthesis; UDP-N-acetyl-alpha-D-glucosamine biosynthesis; N-acetyl-alpha-D-glucosamine 1-phosphate from alpha-D-glucosamine 6-phosphate (route II): step 2/2. Its pathway is nucleotide-sugar biosynthesis; UDP-N-acetyl-alpha-D-glucosamine biosynthesis; UDP-N-acetyl-alpha-D-glucosamine from N-acetyl-alpha-D-glucosamine 1-phosphate: step 1/1. The protein operates within bacterial outer membrane biogenesis; LPS lipid A biosynthesis. Functionally, catalyzes the last two sequential reactions in the de novo biosynthetic pathway for UDP-N-acetylglucosamine (UDP-GlcNAc). The C-terminal domain catalyzes the transfer of acetyl group from acetyl coenzyme A to glucosamine-1-phosphate (GlcN-1-P) to produce N-acetylglucosamine-1-phosphate (GlcNAc-1-P), which is converted into UDP-GlcNAc by the transfer of uridine 5-monophosphate (from uridine 5-triphosphate), a reaction catalyzed by the N-terminal domain. This is Bifunctional protein GlmU from Synechococcus sp. (strain ATCC 27144 / PCC 6301 / SAUG 1402/1) (Anacystis nidulans).